Here is a 247-residue protein sequence, read N- to C-terminus: tRNA (guanine-N(7)-)-methyltransferase (247 aa).

S-adenosyl-L-methionine is bound by residues glycine 70, 93–94 (EI), 128–129 (NA), and leucine 148. Aspartate 151 is a catalytic residue. S-adenosyl-L-methionine is bound at residue 226–228 (SEE).

Belongs to the class I-like SAM-binding methyltransferase superfamily. TrmB family.

The protein resides in the nucleus. The catalysed reaction is guanosine(46) in tRNA + S-adenosyl-L-methionine = N(7)-methylguanosine(46) in tRNA + S-adenosyl-L-homocysteine. Its pathway is tRNA modification; N(7)-methylguanine-tRNA biosynthesis. In terms of biological role, catalyzes the formation of N(7)-methylguanine at position 46 (m7G46) in tRNA. The chain is tRNA (guanine-N(7)-)-methyltransferase from Drosophila pseudoobscura pseudoobscura (Fruit fly).